The primary structure comprises 395 residues: Na(+)/H(+) antiporter NhaA (395 aa).

Helical transmembrane passes span 11–31 (FAME…ALII), 61–81 (LLLW…GLEV), 96–116 (IVLP…IYWF), 127–147 (GWAI…ALLG), 156–176 (LFLM…IAIF), 179–199 (GTLS…LVAM), 202–222 (MGVV…VCVL), 264–284 (FGIL…GVTL), 295–315 (IAVG…WMAV), 331–351 (VLGV…VGSL), and 366–386 (MGIL…TAAA).

It belongs to the NhaA Na(+)/H(+) (TC 2.A.33) antiporter family.

Its subcellular location is the cell inner membrane. It carries out the reaction Na(+)(in) + 2 H(+)(out) = Na(+)(out) + 2 H(+)(in). Functionally, na(+)/H(+) antiporter that extrudes sodium in exchange for external protons. This is Na(+)/H(+) antiporter NhaA from Pseudomonas fluorescens (strain ATCC BAA-477 / NRRL B-23932 / Pf-5).